The primary structure comprises 78 residues: MSEVVVKEQLEQYISKIERLEQEKADLSQEVKDIFQDASSHGFDVKAMKSILKLKKLDKDKLAEQDAMLELYRDTLGI.

Belongs to the UPF0335 family.

In Rickettsia peacockii (strain Rustic), this protein is UPF0335 protein RPR_04100.